The chain runs to 264 residues: MKKVTVSGLLKKKQAGEKITSLTAYDASFAKMFDEQGVDALLIGDSLGMVLQGEDDTLPVTIDDIAYHTKSVRRGTERAFVLADMPFMSYATPEQTYANAAKLMAAGASMVKMEGGSWLCDTIKGLNLRGVPVCGHLGLTPQSVHVFGGFKVQGREASQAEKLLSEAKALEEAGIQLLVLECVPSSLGKAVSEALTIPVIGIGAGKDTDGQILVMHDMFGISANYMPKFSKNYLVETGDMRKAVSKYIEDVQSGAFPSPEHSFQ.

Mg(2+) contacts are provided by Asp45 and Asp84. Residues 45–46 (DS), Asp84, and Lys112 contribute to the 3-methyl-2-oxobutanoate site. Position 114 (Glu114) interacts with Mg(2+). Glu181 acts as the Proton acceptor in catalysis.

This sequence belongs to the PanB family. In terms of assembly, homodecamer; pentamer of dimers. Requires Mg(2+) as cofactor.

It localises to the cytoplasm. The enzyme catalyses 3-methyl-2-oxobutanoate + (6R)-5,10-methylene-5,6,7,8-tetrahydrofolate + H2O = 2-dehydropantoate + (6S)-5,6,7,8-tetrahydrofolate. Its pathway is cofactor biosynthesis; (R)-pantothenate biosynthesis; (R)-pantoate from 3-methyl-2-oxobutanoate: step 1/2. Catalyzes the reversible reaction in which hydroxymethyl group from 5,10-methylenetetrahydrofolate is transferred onto alpha-ketoisovalerate to form ketopantoate. The protein is 3-methyl-2-oxobutanoate hydroxymethyltransferase of Alteromonas mediterranea (strain DSM 17117 / CIP 110805 / LMG 28347 / Deep ecotype).